Here is a 155-residue protein sequence, read N- to C-terminus: Small ribosomal subunit protein uS7 (155 aa).

The protein belongs to the universal ribosomal protein uS7 family. As to quaternary structure, part of the 30S ribosomal subunit. Contacts proteins S9 and S11.

Its function is as follows. One of the primary rRNA binding proteins, it binds directly to 16S rRNA where it nucleates assembly of the head domain of the 30S subunit. Is located at the subunit interface close to the decoding center, probably blocks exit of the E-site tRNA. This Nautilia profundicola (strain ATCC BAA-1463 / DSM 18972 / AmH) protein is Small ribosomal subunit protein uS7.